The chain runs to 477 residues: Proline--tRNA ligase (477 aa).

This sequence belongs to the class-II aminoacyl-tRNA synthetase family. ProS type 3 subfamily. As to quaternary structure, homodimer.

It is found in the cytoplasm. It catalyses the reaction tRNA(Pro) + L-proline + ATP = L-prolyl-tRNA(Pro) + AMP + diphosphate. Catalyzes the attachment of proline to tRNA(Pro) in a two-step reaction: proline is first activated by ATP to form Pro-AMP and then transferred to the acceptor end of tRNA(Pro). The polypeptide is Proline--tRNA ligase (Methanoculleus marisnigri (strain ATCC 35101 / DSM 1498 / JR1)).